The primary structure comprises 543 residues: Phenylalanine--tRNA ligase beta subunit (543 aa).

Residues 269–344 form the B5 domain; the sequence is FDFRIMRPAR…KSKGIENIEE (76 aa). Positions 322, 328, 331, and 332 each coordinate Mg(2+).

The protein belongs to the phenylalanyl-tRNA synthetase beta subunit family. Type 2 subfamily. Tetramer of two alpha and two beta subunits. Requires Mg(2+) as cofactor.

It is found in the cytoplasm. The enzyme catalyses tRNA(Phe) + L-phenylalanine + ATP = L-phenylalanyl-tRNA(Phe) + AMP + diphosphate + H(+). The chain is Phenylalanine--tRNA ligase beta subunit from Thermoplasma acidophilum (strain ATCC 25905 / DSM 1728 / JCM 9062 / NBRC 15155 / AMRC-C165).